The chain runs to 161 residues: Probable chemoreceptor glutamine deamidase CheD (161 aa).

This sequence belongs to the CheD family.

It catalyses the reaction L-glutaminyl-[protein] + H2O = L-glutamyl-[protein] + NH4(+). Its function is as follows. Probably deamidates glutamine residues to glutamate on methyl-accepting chemotaxis receptors (MCPs), playing an important role in chemotaxis. This chain is Probable chemoreceptor glutamine deamidase CheD, found in Trichlorobacter lovleyi (strain ATCC BAA-1151 / DSM 17278 / SZ) (Geobacter lovleyi).